Here is a 166-residue protein sequence, read N- to C-terminus: uncharacterized protein (166 aa).

This is an uncharacterized protein from Acidianus hospitalis (AFV-1).